The chain runs to 385 residues: MAIPHASNETSYLLPPNKEDWEGQGIPDFVYEQEELMMEGVQWPRGALSLLNTPPLSHFDSALCSAWRQRMELGLFRYPLGELPTQTLPGTVGFVAQLNVERGVQRRCPQNIKSVRQEFDPEQFNFNQIRPGEVLFRLHRKQDCSGTVQQEDILVVINVSPLEWGHVLLVPEPARGLPQRLLPGALRAGVEAVLLSSHPGFRVGFNSLGGLASVNHLHLHGYYLAHRLPVEGAPSEPLDPRGRLHVLQALPAPGFLFYTSRPGPDLEALISRVCRATDYLTDCEIAHNLFVTRGAPPGKATSSSALSGVRVILWPRKPSFGIKEGEAFNVALCELAGHLPVKTAQDFSSLTEAAALALIRECLLPPAQAEDVRAALVALIAREEE.

The active-site Tele-GMP-histidine intermediate is the histidine 218.

It belongs to the GDPGP1 family.

The protein localises to the cytoplasm. It catalyses the reaction GDP-alpha-D-glucose + phosphate = alpha-D-glucose 1-phosphate + GDP + H(+). Functionally, specific and highly efficient GDP-D-glucose phosphorylase regulating the levels of GDP-D-glucose in cells. The sequence is that of GDP-D-glucose phosphorylase 1 (GDPGP1) from Bos taurus (Bovine).